The primary structure comprises 176 residues: Protein GrpE (176 aa).

The segment at Met1 to Glu28 is disordered.

The protein belongs to the GrpE family. As to quaternary structure, homodimer.

It localises to the cytoplasm. Participates actively in the response to hyperosmotic and heat shock by preventing the aggregation of stress-denatured proteins, in association with DnaK and GrpE. It is the nucleotide exchange factor for DnaK and may function as a thermosensor. Unfolded proteins bind initially to DnaJ; upon interaction with the DnaJ-bound protein, DnaK hydrolyzes its bound ATP, resulting in the formation of a stable complex. GrpE releases ADP from DnaK; ATP binding to DnaK triggers the release of the substrate protein, thus completing the reaction cycle. Several rounds of ATP-dependent interactions between DnaJ, DnaK and GrpE are required for fully efficient folding. This chain is Protein GrpE, found in Campylobacter jejuni subsp. jejuni serotype O:2 (strain ATCC 700819 / NCTC 11168).